Here is a 349-residue protein sequence, read N- to C-terminus: Lachesin (349 aa).

Residues 1–18 (MDLRLYTIFVGFFSVVYA) form the signal peptide. One can recognise an Ig-like V-type domain in the interval 22-127 (PTISYISQEQ…NKITAEVDLQ (106 aa)). An intrachain disulfide couples Cys-43 to Cys-110. 2 consecutive Ig-like C2-type domains span residues 132-218 (PVIS…IAVE) and 222-315 (PPVI…VELF). Asn-137 carries an N-linked (GlcNAc...) asparagine glycan. 2 disulfides stabilise this stretch: Cys-154–Cys-201 and Cys-244–Cys-299. Residue Gly-332 is the site of GPI-anchor amidated glycine attachment. A propeptide spans 333–349 (DAAEISTSMALILISTI) (removed in mature form).

In terms of processing, the N-terminus is blocked. Expressed by all neurogenic cells early, but only those cells that become neuroblasts continue to express it. Expressed by neuroblasts, ganglion mother cells and neurons early in their lives, but expression becomes restricted to a subset of neurons as development progresses. Expressed by sensory neurons as they delaminate from the body wall ectoderm. It is also present on growing axons of the CNS and PNS and becomes restricted to a subset of axons later in development.

The protein resides in the cell membrane. Its function is as follows. May play a role in early neuronal differentiation and axon outgrowth. In Schistocerca americana (American grasshopper), this protein is Lachesin (LAC).